The following is a 169-amino-acid chain: Large ribosomal subunit protein uL18 (169 aa).

Belongs to the universal ribosomal protein uL18 family. In terms of assembly, part of the 50S ribosomal subunit. Contacts the 5S and 23S rRNAs.

In terms of biological role, this is one of the proteins that bind and probably mediate the attachment of the 5S RNA into the large ribosomal subunit, where it forms part of the central protuberance. This Methanothrix thermoacetophila (strain DSM 6194 / JCM 14653 / NBRC 101360 / PT) (Methanosaeta thermophila) protein is Large ribosomal subunit protein uL18.